Here is a 146-residue protein sequence, read N- to C-terminus: Large ribosomal subunit protein uL15 (146 aa).

Residues 1–56 (MKLHELKAAEGANKASKRVGRGTGSGLGKTSGKGQNGQNSRSGGGVRPGFEGGQMP) form a disordered region. Gly residues-rich tracts occupy residues 21–35 (RGTG…GKGQ) and 42–52 (SGGGVRPGFEG).

Belongs to the universal ribosomal protein uL15 family. As to quaternary structure, part of the 50S ribosomal subunit.

Binds to the 23S rRNA. The protein is Large ribosomal subunit protein uL15 of Clostridium botulinum (strain Langeland / NCTC 10281 / Type F).